We begin with the raw amino-acid sequence, 357 residues long: Nitronate monooxygenase npaC (357 aa).

3 residues coordinate FMN: Gln-167, Gly-172, and Gly-206.

It belongs to the nitronate monooxygenase family. NMO class I subfamily. Requires FMN as cofactor.

Nitronate monooxygenase; part of the gene cluster that mediates the biosynthesis of the deadly neurotoxic nitroalkane 3-nitropropanoic acid (3-NPA) that acts as an antimetabolite of succinate and irreversibly inhibits succinate dehydrogenase and disrupts mitochondrial oxidative phosphorylation. Catalyzes the oxidation of 3-NPA to nitrite and malonic semialdehyde. NpaC is not conserved in all fungal npa clusters and, while it is possible that it serves as a self-protection mechanism against accumulation of 3-NPA (by npaA and npaB) in the producing host, the more likely scenario may be the three enzymes representing an alternative catabolic pathway of aspartate to generate readily metabolizable nitrogen and carbon sources. The sequence is that of Nitronate monooxygenase npaC from Metarhizium robertsii (strain ARSEF 23 / ATCC MYA-3075) (Metarhizium anisopliae (strain ARSEF 23)).